A 389-amino-acid polypeptide reads, in one-letter code: Nicotinate phosphoribosyltransferase (389 aa).

Position 211 is a phosphohistidine; by autocatalysis (H211).

It belongs to the NAPRTase family. In terms of processing, transiently phosphorylated on a His residue during the reaction cycle. Phosphorylation strongly increases the affinity for substrates and increases the rate of nicotinate D-ribonucleotide production. Dephosphorylation regenerates the low-affinity form of the enzyme, leading to product release.

It carries out the reaction nicotinate + 5-phospho-alpha-D-ribose 1-diphosphate + ATP + H2O = nicotinate beta-D-ribonucleotide + ADP + phosphate + diphosphate. It functions in the pathway cofactor biosynthesis; NAD(+) biosynthesis; nicotinate D-ribonucleotide from nicotinate: step 1/1. In terms of biological role, catalyzes the synthesis of beta-nicotinate D-ribonucleotide from nicotinate and 5-phospho-D-ribose 1-phosphate at the expense of ATP. The chain is Nicotinate phosphoribosyltransferase from Desulforapulum autotrophicum (strain ATCC 43914 / DSM 3382 / VKM B-1955 / HRM2) (Desulfobacterium autotrophicum).